A 149-amino-acid chain; its full sequence is Calmodulin (149 aa).

Ala2 bears the N-acetylalanine mark. 4 EF-hand domains span residues Glu8 to Asn43, Pro44 to Asp79, Asp81 to Lys116, and Leu117 to Lys149. Positions 21, 23, 25, 27, 32, 57, 59, 61, 63, 68, 94, 96, 98, 100, 105, 130, 132, 134, 136, and 141 each coordinate Ca(2+).

Belongs to the calmodulin family.

The protein localises to the cytoplasm. Functionally, calmodulin mediates the control of a large number of enzymes, ion channels and other proteins by Ca(2+). Among the enzymes to be stimulated by the calmodulin-Ca(2+) complex are a number of protein kinases and phosphatases. In Plasmodium falciparum (isolate 3D7), this protein is Calmodulin.